A 214-amino-acid chain; its full sequence is MVTVSIVEIFLIISLPLLFFSSFADAGDPLQELISFVHGAVLAVPLLLLRSFFLGYYPPDSALVEEQWMRFFLFDYVFPLFCLPFFLFTSRSLERVSLVSGVSALFGAYTSFFFVHVYTQLNDPDLLARVMTLVLYMTNLLQLHAHVSFSMRTRLPLLGLIAALCIFLLMGAFSATVMTLCFFNARTVVYTSMLAGAGGVALLTHFFAVRINVR.

7 consecutive transmembrane segments (helical) span residues 4-23, 35-57, 67-89, 96-118, 128-150, 155-177, and 187-209; these read VSIV…FSSF, SFVH…LGYY, QWMR…FLFT, VSLV…VHVY, ARVM…VSFS, LPLL…SATV, and TVVY…FFAV.

The protein resides in the cell membrane. This is an uncharacterized protein from Treponema pallidum (strain Nichols).